A 363-amino-acid polypeptide reads, in one-letter code: Flagellar P-ring protein (363 aa).

The first 20 residues, 1 to 20 (MKLKLILAVAMLAFSLPSQA), serve as a signal peptide directing secretion.

Belongs to the FlgI family. In terms of assembly, the basal body constitutes a major portion of the flagellar organelle and consists of four rings (L,P,S, and M) mounted on a central rod.

It is found in the periplasm. It localises to the bacterial flagellum basal body. In terms of biological role, assembles around the rod to form the L-ring and probably protects the motor/basal body from shearing forces during rotation. The protein is Flagellar P-ring protein of Shewanella sp. (strain MR-4).